We begin with the raw amino-acid sequence, 398 residues long: Carbamoyl phosphate synthase large chain (398 aa).

One can recognise an ATP-grasp domain in the interval 1-187 (KLGVPQPEGG…LAKIAAKVIV (187 aa)). Residues 1–255 (KLGVPQPEGG…YKAELAADNV (255 aa)) are carbamoyl phosphate synthetic domain. Residues arginine 32, aspartate 71, leucine 73, glutamate 78, glycine 103, valine 104, histidine 105, serine 106, glutamine 146, and glutamate 158 each coordinate ATP. 3 residues coordinate Mg(2+): glutamine 146, glutamate 158, and asparagine 160. The Mn(2+) site is built by glutamine 146, glutamate 158, and asparagine 160. The 142-residue stretch at 254 to 395 (NVLPLTGKVF…NEYHKEMEEE (142 aa)) folds into the MGS-like domain. An allosteric domain region spans residues 256–398 (LPLTGKVFLS…HKEMEEENKV (143 aa)).

Belongs to the CarB family. As to quaternary structure, composed of two chains; the small (or glutamine) chain promotes the hydrolysis of glutamine to ammonia, which is used by the large (or ammonia) chain to synthesize carbamoyl phosphate. Tetramer of heterodimers (alpha,beta)4. Requires Mg(2+) as cofactor. Mn(2+) is required as a cofactor.

The catalysed reaction is hydrogencarbonate + L-glutamine + 2 ATP + H2O = carbamoyl phosphate + L-glutamate + 2 ADP + phosphate + 2 H(+). The enzyme catalyses hydrogencarbonate + NH4(+) + 2 ATP = carbamoyl phosphate + 2 ADP + phosphate + 2 H(+). It participates in amino-acid biosynthesis; L-arginine biosynthesis; carbamoyl phosphate from bicarbonate: step 1/1. It functions in the pathway pyrimidine metabolism; UMP biosynthesis via de novo pathway; (S)-dihydroorotate from bicarbonate: step 1/3. Large subunit of the glutamine-dependent carbamoyl phosphate synthetase (CPSase). CPSase catalyzes the formation of carbamoyl phosphate from the ammonia moiety of glutamine, carbonate, and phosphate donated by ATP, constituting the first step of 2 biosynthetic pathways, one leading to arginine and/or urea and the other to pyrimidine nucleotides. The large subunit (synthetase) binds the substrates ammonia (free or transferred from glutamine from the small subunit), hydrogencarbonate and ATP and carries out an ATP-coupled ligase reaction, activating hydrogencarbonate by forming carboxy phosphate which reacts with ammonia to form carbamoyl phosphate. The protein is Carbamoyl phosphate synthase large chain of Methanosarcina barkeri.